Reading from the N-terminus, the 405-residue chain is Arginine biosynthesis bifunctional protein ArgJ (405 aa).

Thr-167, Lys-190, Thr-201, Glu-281, Asn-400, and Ser-405 together coordinate substrate. Thr-201 functions as the Nucleophile in the catalytic mechanism.

The protein belongs to the ArgJ family. In terms of assembly, heterotetramer of two alpha and two beta chains.

It localises to the cytoplasm. The catalysed reaction is N(2)-acetyl-L-ornithine + L-glutamate = N-acetyl-L-glutamate + L-ornithine. It catalyses the reaction L-glutamate + acetyl-CoA = N-acetyl-L-glutamate + CoA + H(+). It functions in the pathway amino-acid biosynthesis; L-arginine biosynthesis; L-ornithine and N-acetyl-L-glutamate from L-glutamate and N(2)-acetyl-L-ornithine (cyclic): step 1/1. Its pathway is amino-acid biosynthesis; L-arginine biosynthesis; N(2)-acetyl-L-ornithine from L-glutamate: step 1/4. Catalyzes two activities which are involved in the cyclic version of arginine biosynthesis: the synthesis of N-acetylglutamate from glutamate and acetyl-CoA as the acetyl donor, and of ornithine by transacetylation between N(2)-acetylornithine and glutamate. The polypeptide is Arginine biosynthesis bifunctional protein ArgJ (Nocardia farcinica (strain IFM 10152)).